The primary structure comprises 461 residues: General transcription factor IIH subunit 2 (461 aa).

The span at 1 to 13 shows a compositional bias: polar residues; that stretch reads MSKNIYNNNAQNK. Disordered stretches follow at residues 1-37 and 61-83; these read MSKNIYNNNAQNKRTNRSLYDDEDGPAHVLQTNDEDG and LRPSNQEERNTRNRRLKNKDRDG. A compositionally biased stretch (basic and acidic residues) spans 61 to 71; that stretch reads LRPSNQEERNT. Positions 98-275 constitute a VWFA domain; sequence HLCLILDLSK…ESLMLKCQPP (178 aa). The segment at 315–332 adopts a C4-type zinc-finger fold; the sequence is CPRCGVKSCELPTDCQIC. Over residues 423 to 447 the composition is skewed to low complexity; that stretch reads TNGKTNGNEITNGNGNGNGNENENG. The interval 423-461 is disordered; sequence TNGKTNGNEITNGNGNGNGNENENGNGNGNGNGNGNGLH. The interval 434-459 is 13 X 2 tandem repeat of N-[GE]; the sequence is NGNGNGNGNENENGNGNGNGNGNGNG. Gly residues predominate over residues 448–461; sequence NGNGNGNGNGNGLH.

It belongs to the GTF2H2 family. Component of the 7-subunit TFIIH core complex composed of XPB/repB, XPD/repD, gtf2h1, gtf2h2, gtf2h3, gtf2h4 and gtf2h5, which is active in NER. The core complex associates with the 3-subunit CDK-activating kinase (CAK) module composed of cycH/cyclin H, cdk7 and mnat1 to form the 10-subunit holoenzyme (holo-TFIIH) active in transcription.

It is found in the nucleus. Component of the general transcription and DNA repair factor IIH (TFIIH) core complex, which is involved in general and transcription-coupled nucleotide excision repair (NER) of damaged DNA and, when complexed to CAK, in RNA transcription by RNA polymerase II. In NER, TFIIH acts by opening DNA around the lesion to allow the excision of the damaged oligonucleotide and its replacement by a new DNA fragment. In transcription, TFIIH has an essential role in transcription initiation. When the pre-initiation complex (PIC) has been established, TFIIH is required for promoter opening and promoter escape. Phosphorylation of the C-terminal tail (CTD) of the largest subunit of RNA polymerase II by the kinase module CAK controls the initiation of transcription. In Dictyostelium discoideum (Social amoeba), this protein is General transcription factor IIH subunit 2 (gtf2h2).